The following is a 615-amino-acid chain: ATP-dependent zinc metalloprotease FtsH (615 aa).

The Cytoplasmic portion of the chain corresponds to Met1 to Pro8. A helical transmembrane segment spans residues Trp9–Phe29. Residues Ser30–Val104 lie on the Periplasmic side of the membrane. Residues Ala105–Phe125 traverse the membrane as a helical segment. At His126–Lys615 the chain is on the cytoplasmic side. Gly198–Thr205 provides a ligand contact to ATP. Position 420 (His420) interacts with Zn(2+). Residue Glu421 is part of the active site. Residues His424 and Asp497 each coordinate Zn(2+).

The protein in the central section; belongs to the AAA ATPase family. This sequence in the C-terminal section; belongs to the peptidase M41 family. In terms of assembly, homohexamer. Requires Zn(2+) as cofactor.

It localises to the cell inner membrane. Acts as a processive, ATP-dependent zinc metallopeptidase for both cytoplasmic and membrane proteins. Plays a role in the quality control of integral membrane proteins. This is ATP-dependent zinc metalloprotease FtsH from Pseudomonas putida (strain ATCC 700007 / DSM 6899 / JCM 31910 / BCRC 17059 / LMG 24140 / F1).